Reading from the N-terminus, the 468-residue chain is Glutamate--tRNA ligase (468 aa).

A 'HIGH' region motif is present at residues 11 to 21 (PSPTGFIHLGN). Positions 243–247 (KMSKR) match the 'KMSKS' region motif. Residue Lys-246 participates in ATP binding.

Belongs to the class-I aminoacyl-tRNA synthetase family. Glutamate--tRNA ligase type 1 subfamily. In terms of assembly, monomer.

The protein resides in the cytoplasm. It carries out the reaction tRNA(Glu) + L-glutamate + ATP = L-glutamyl-tRNA(Glu) + AMP + diphosphate. In terms of biological role, catalyzes the attachment of glutamate to tRNA(Glu) in a two-step reaction: glutamate is first activated by ATP to form Glu-AMP and then transferred to the acceptor end of tRNA(Glu). This Cupriavidus pinatubonensis (strain JMP 134 / LMG 1197) (Cupriavidus necator (strain JMP 134)) protein is Glutamate--tRNA ligase.